A 319-amino-acid polypeptide reads, in one-letter code: Transmembrane and ubiquitin-like domain-containing protein 2 (319 aa).

A helical transmembrane segment spans residues 36–56; the sequence is VMVVAGVVVLTLALVLAWLST. Disordered stretches follow at residues 88–130 and 146–165; these read VNQG…GDME and QAGL…DSTC. Positions 95–111 are enriched in basic and acidic residues; the sequence is PTEHPHPSGGSDDKAEE. The Ubiquitin-like domain maps to 173–246; the sequence is INVRLKFLND…IHCHRSPPGA (74 aa). The next 2 membrane-spanning stretches (helical) occupy residues 264–284 and 293–313; these read LGVN…GVVW and FFTA…SFLV.

The protein resides in the membrane. The sequence is that of Transmembrane and ubiquitin-like domain-containing protein 2 (Tmub2) from Rattus norvegicus (Rat).